Here is a 150-residue protein sequence, read N- to C-terminus: Avidin-related protein 1 (150 aa).

Residues 1–24 (MVHATSPLLLLLLLSLALVAPGLS) form the signal peptide. The region spanning 26 to 147 (RKCSLTGKWD…GNNDFTRQRT (122 aa)) is the Avidin-like domain. A disulfide bridge links Cys28 with Cys105. Residues Asn36 and Ser40 each coordinate biotin. Residue Asn54 is glycosylated (N-linked (GlcNAc...) asparagine). Biotin is bound by residues Tyr57, Thr59, and Asp63. 2 N-linked (GlcNAc...) asparagine glycosylation sites follow: Asn67 and Asn93. Biotin is bound by residues Ser95, Ser99, and Asn140.

This sequence belongs to the avidin/streptavidin family. Homotetramer. In terms of processing, glycosylated.

The protein resides in the secreted. Its function is as follows. Forms a strong non-covalent specific complex with biotin. The protein is Avidin-related protein 1 (AVR1) of Gallus gallus (Chicken).